The sequence spans 110 residues: MTSVVIVVSVAVLLGVLVITDSSWPCVFNSTAKWSLQHIESVTLERPRWSRVKKPSSSKWRHLRTILQWWQERRKQAHLLDTWQKQAMDMDECLTRYRDAKHDDICVISE.

Residues 1–22 form the signal peptide; sequence MTSVVIVVSVAVLLGVLVITDS. The N-linked (GlcNAc...) asparagine glycan is linked to asparagine 29. The short motif at 61 to 74 is the RxLR-dEER element; that stretch reads RHLRTILQWWQERR.

The protein belongs to the RxLR effector family.

Its subcellular location is the secreted. The protein resides in the host nucleus. It localises to the host cytoplasm. Secreted effector that completely suppresses the host cell death induced by cell death-inducing proteins. The polypeptide is Secreted RxLR effector protein 89 (Plasmopara viticola (Downy mildew of grapevine)).